A 461-amino-acid polypeptide reads, in one-letter code: uncharacterized protein (461 aa).

This is an uncharacterized protein from Saccharomyces cerevisiae (strain ATCC 204508 / S288c) (Baker's yeast).